The following is a 443-amino-acid chain: Pentatricopeptide repeat-containing protein 6, mitochondrial (443 aa).

Residues 1–13 (MRILGSLPNNIRK) constitute a mitochondrion transit peptide. PPR repeat units lie at residues 130–164 (NIVDYTHILRVAMYTGNKHILEYIVARVKEKRIRP) and 220–254 (NSTTYDYLMVGLSRDGKIREIYDLIDTVWGINENS).

The protein resides in the mitochondrion. Mitochondrial RNA-binding protein required for the stability of the atp9 mRNA. This Schizosaccharomyces pombe (strain 972 / ATCC 24843) (Fission yeast) protein is Pentatricopeptide repeat-containing protein 6, mitochondrial (ppr6).